The following is a 2314-amino-acid chain: Protein Ycf2 (2314 aa).

1653-1660 contributes to the ATP binding site; the sequence is GSIGTGRS.

The protein belongs to the Ycf2 family.

Its subcellular location is the plastid. The protein localises to the chloroplast stroma. Functionally, probable ATPase of unknown function. Its presence in a non-photosynthetic plant (Epifagus virginiana) and experiments in tobacco indicate that it has an essential function which is probably not related to photosynthesis. The sequence is that of Protein Ycf2 from Piper cenocladum (Ant piper).